Reading from the N-terminus, the 424-residue chain is Oleosin-B3 (424 aa).

Positions 1 to 37 are polar; it reads MRNEIQNETAQTDQTQGSMFSFFNLFPFLLPMFEVIK. 3 helical membrane-spanning segments follow: residues 16 to 36, 38 to 58, and 69 to 89; these read QGSMFSFFNLFPFLLPMFEVI, MVVASVASVVYLGFAGVTLSG, and LFIIFSPILLPAIAATTVLAA. The tract at residues 38-119 is hydrophobic; the sequence is MVVASVASVV…GIPESIKPSN (82 aa). Repeat copies occupy residues 111–120, 121–130, 131–140, 141–150, 196–202, 203–209, 210–216, 217–223, 241–258, 259–276, 277–294, 301–318, 319–336, 337–354, 396–400, 401–405, 406–410, and 411–415. The segment at 111 to 150 is 4 X 10 AA tandem repeats of I-P-[EV]-S-I-K-P-S-N-[IV]; sequence IPESIKPSNVIPESIKPSNIIPESIKPSNIIPVSIKPSNI. The disordered stretch occupies residues 164-424; the sequence is KIKAKQEEKS…SSHGSGGKHI (261 aa). Residues 167–220 show a composition bias toward basic and acidic residues; it reads AKQEEKSKGKSEDSSKGKGKSKGEDTTTDEDKHGKGESKHGKGESKHGKGESTH. Positions 196-223 are 4 X 7 AA tandem repeats of E-[SD]-[KT]-H-G-K-G; sequence EDKHGKGESKHGKGESKHGKGESTHGKG. The interval 241–354 is 6 X 18 AA tandem repeats of [KR]-H-[EG]-[SG]-G-G-[SA]-[PSA]-M-G-G-G-K-H-[GE]-S-[GV]-G; sequence KHGSGGSPMG…MGGGKHGSGG (114 aa). The span at 242–255 shows a compositional bias: gly residues; it reads HGSGGSPMGGGKHG. The segment covering 288 to 304 has biased composition (basic and acidic residues); sequence GKHESVGKHGSGGKHES. Over residues 341-355 the composition is skewed to gly residues; it reads GGSAMGGGKHGSGGK. Residues 391–416 are compositionally biased toward low complexity; sequence SSTSESSDGSSSDGSSSDGSSSDGSS. The 4 X 5 AA tandem repeats of S-S-D-G-S stretch occupies residues 396 to 415; that stretch reads SSDGSSSDGSSSDGSSSDGS.

It belongs to the oleosin family. The full-length protein is found in the tapetal lipid bodies of immature anthers, the proteolytically cleaved C-terminal product is found on the coats of pollen grains. No expression is detected in other flower organs, siliques or seedlings.

The protein localises to the lipid droplet. Its subcellular location is the membrane. Many of the major pollen coat proteins are derived from endoproteolytic cleavage of oleosin-like proteins. The protein is Oleosin-B3 of Brassica napus (Rape).